The following is a 290-amino-acid chain: MTMVKLEQIFWHVWINGDLVPYQFARIHVLTHSLHYSGSVFEGERAYNGKVFKLKEHTARLIKSAEALGLKVPYNVDEIIKAHECVIKQNNIKDAYIRPLIWCGDESLNITNQYLSTNLLIAGIPSMPRSFEKGINLHVSRWRKAMPDSTPVQSKSAAQYNMAITSKKEAKALGYEDALLLDYEGYIAECTTTNIFFVKDKILYTPIADRFLNGITRQTIIEIAKDLGLEVKEERLKLEQIEDFTGCFVTGTAIEVQNIDSIDLGNKKIIFDDHKIADRLKEEYRRVVRE.

K155 bears the N6-(pyridoxal phosphate)lysine mark.

The protein belongs to the class-IV pyridoxal-phosphate-dependent aminotransferase family. Pyridoxal 5'-phosphate serves as cofactor.

It catalyses the reaction L-leucine + 2-oxoglutarate = 4-methyl-2-oxopentanoate + L-glutamate. The enzyme catalyses L-isoleucine + 2-oxoglutarate = (S)-3-methyl-2-oxopentanoate + L-glutamate. The catalysed reaction is L-valine + 2-oxoglutarate = 3-methyl-2-oxobutanoate + L-glutamate. It participates in amino-acid biosynthesis; L-isoleucine biosynthesis; L-isoleucine from 2-oxobutanoate: step 4/4. Its pathway is amino-acid biosynthesis; L-leucine biosynthesis; L-leucine from 3-methyl-2-oxobutanoate: step 4/4. It functions in the pathway amino-acid biosynthesis; L-valine biosynthesis; L-valine from pyruvate: step 4/4. Functionally, acts on leucine, isoleucine and valine. This Rickettsia conorii (strain ATCC VR-613 / Malish 7) protein is Probable branched-chain-amino-acid aminotransferase (ilvE).